A 589-amino-acid chain; its full sequence is Probable translation initiation factor IF-2 (589 aa).

A tr-type G domain is found at 3–224 (VRSPFVVVMG…AGVSQRFIPR (222 aa)). The G1 stretch occupies residues 12–19 (GHVDVGKT). 12–19 (GHVDVGKT) contacts GTP. The segment at 37–41 (MITQH) is G2. The segment at 78-81 (DTPG) is G3. GTP is bound by residues 78-82 (DTPGH) and 132-135 (NKLD). Residues 132–135 (NKLD) are G4. Residues 200–202 (SAV) form a G5 region.

Belongs to the TRAFAC class translation factor GTPase superfamily. Classic translation factor GTPase family. IF-2 subfamily.

Functionally, function in general translation initiation by promoting the binding of the formylmethionine-tRNA to ribosomes. Seems to function along with eIF-2. The protein is Probable translation initiation factor IF-2 of Pyrobaculum neutrophilum (strain DSM 2338 / JCM 9278 / NBRC 100436 / V24Sta) (Thermoproteus neutrophilus).